Here is a 535-residue protein sequence, read N- to C-terminus: CTP synthase (535 aa).

Positions 1 to 266 (MKTKFIFITG…DEQVVEKLNI (266 aa)) are amidoligase domain. Serine 14 is a binding site for CTP. Serine 14 serves as a coordination point for UTP. Residues 15-20 (SIGKGL) and aspartate 72 each bind ATP. 2 residues coordinate Mg(2+): aspartate 72 and glutamate 140. CTP is bound by residues 147–149 (DIE), 187–192 (KTKPTQ), and lysine 223. UTP-binding positions include 187–192 (KTKPTQ) and lysine 223. Positions 292–534 (RIAIVGKYVN…IGASLTHRNQ (243 aa)) constitute a Glutamine amidotransferase type-1 domain. An L-glutamine-binding site is contributed by glycine 354. Catalysis depends on cysteine 381, which acts as the Nucleophile; for glutamine hydrolysis. Residues 382 to 385 (LGMQ), glutamate 405, and arginine 462 contribute to the L-glutamine site. Active-site residues include histidine 507 and glutamate 509.

It belongs to the CTP synthase family. In terms of assembly, homotetramer.

It catalyses the reaction UTP + L-glutamine + ATP + H2O = CTP + L-glutamate + ADP + phosphate + 2 H(+). The enzyme catalyses L-glutamine + H2O = L-glutamate + NH4(+). It carries out the reaction UTP + NH4(+) + ATP = CTP + ADP + phosphate + 2 H(+). The protein operates within pyrimidine metabolism; CTP biosynthesis via de novo pathway; CTP from UDP: step 2/2. With respect to regulation, allosterically activated by GTP, when glutamine is the substrate; GTP has no effect on the reaction when ammonia is the substrate. The allosteric effector GTP functions by stabilizing the protein conformation that binds the tetrahedral intermediate(s) formed during glutamine hydrolysis. Inhibited by the product CTP, via allosteric rather than competitive inhibition. Catalyzes the ATP-dependent amination of UTP to CTP with either L-glutamine or ammonia as the source of nitrogen. Regulates intracellular CTP levels through interactions with the four ribonucleotide triphosphates. The sequence is that of CTP synthase from Trichlorobacter lovleyi (strain ATCC BAA-1151 / DSM 17278 / SZ) (Geobacter lovleyi).